A 524-amino-acid chain; its full sequence is B3 domain-containing protein Os07g0183700 (524 aa).

2 disordered regions span residues 94–152 (DGEG…TSVS) and 191–232 (PLQP…FQTQ). The segment covering 100 to 109 (CAPPPSPIPA) has biased composition (pro residues). 2 stretches are compositionally biased toward low complexity: residues 110-124 (GPASSTVSAASSAPA) and 200-232 (AAAAAGSPSATTPEPGHGEATPTTSSSAQFQTQ). Positions 336-434 (SFVKPLTYTD…EMFMAVRRTR (99 aa)) form a DNA-binding region, TF-B3.

The protein localises to the nucleus. The chain is B3 domain-containing protein Os07g0183700 from Oryza sativa subsp. japonica (Rice).